Consider the following 386-residue polypeptide: Succinyl-diaminopimelate desuccinylase (386 aa).

H77 contacts Zn(2+). D79 is a catalytic residue. Residue D110 coordinates Zn(2+). The active-site Proton acceptor is the E144. E145, E173, and H359 together coordinate Zn(2+).

Belongs to the peptidase M20A family. DapE subfamily. As to quaternary structure, homodimer. Zn(2+) is required as a cofactor. Co(2+) serves as cofactor.

The enzyme catalyses N-succinyl-(2S,6S)-2,6-diaminopimelate + H2O = (2S,6S)-2,6-diaminopimelate + succinate. Its pathway is amino-acid biosynthesis; L-lysine biosynthesis via DAP pathway; LL-2,6-diaminopimelate from (S)-tetrahydrodipicolinate (succinylase route): step 3/3. Catalyzes the hydrolysis of N-succinyl-L,L-diaminopimelic acid (SDAP), forming succinate and LL-2,6-diaminopimelate (DAP), an intermediate involved in the bacterial biosynthesis of lysine and meso-diaminopimelic acid, an essential component of bacterial cell walls. This Methylibium petroleiphilum (strain ATCC BAA-1232 / LMG 22953 / PM1) protein is Succinyl-diaminopimelate desuccinylase.